Here is a 516-residue protein sequence, read N- to C-terminus: Cytochrome P450 monooxygenase ntnM (516 aa).

The helical transmembrane segment at 22-42 threads the bilayer; it reads IINVILSIAAIALIRALAISI. Residue cysteine 453 participates in heme binding.

This sequence belongs to the cytochrome P450 family. Heme serves as cofactor.

The protein localises to the membrane. Its pathway is secondary metabolite biosynthesis; terpenoid biosynthesis. Cytochrome P450 monooxygenase; part of the gene cluster that mediates the biosynthesis of the meroterpenoids nectripenoids A and B, as well as cochliquninone D and isocochliquninone E. The pathway probably begins with the HR-PKS ntnH that catalyzes two chain-extension steps to form a reduced triketide, which then primes the SAT domain in the NR-PKS ntnG to initiate three more cycles of extension to give a linear hexaketide corresponding to the polyketide part of nectripenoids. The FAD-dependent monooxygenase ntnJ then performs an oxidative decarboxylation at C11 of the ntnH/ntnG product, via an electrophilic aromatic hydroxylation with concomitant ipso-decarboxylation. The membrane-bound polyprenyl transferase ntnF then introduces a farnesyl group before the FAD-dependent monooxygenase ntnK functions as the first epoxidase on terminal C12'-C13' olefin, followed by a second epoxidation on C7'-C8' catalyzed by ntnA. The terpene cyclase/mutase ntnI then initiates the sequential tricyclic ring formation through protonation of the terminal epoxide and catalyzes the regioselective and stereoselective 6/6/6-tricyclic ring formation. The cytochrome P450 monooxygenase ntnM may then hydroxylate C1'. The protein is Cytochrome P450 monooxygenase ntnM of Nectria sp.